The primary structure comprises 213 residues: uncharacterized protein (213 aa).

The N-terminal stretch at 1–21 (MKKILFLTVICFCLSSIKAYA) is a signal peptide.

This is an uncharacterized protein from Rickettsia prowazekii (strain Madrid E).